The following is a 126-amino-acid chain: Nitrogenase-stabilizing/protective protein NifW (126 aa).

The interval 104 to 126 (VPMSEITVERPATTQTDEKGQQR) is disordered.

The protein belongs to the NifW family. As to quaternary structure, homotrimer; associates with NifD.

In terms of biological role, may protect the nitrogenase Fe-Mo protein from oxidative damage. The protein is Nitrogenase-stabilizing/protective protein NifW of Parafrankia sp. (strain EAN1pec).